A 370-amino-acid polypeptide reads, in one-letter code: MVIDPRDFLLSSYDYELNSSLIAQEPIEPRHNARMLHVSKRSGEGLKAFHLKVWDLLAELRAGDLLVMNDTRVLKARLKVRLRNGTFVELFLLEPKGQGRWLCLAKPAKKLRAGDCIWMESSGEESIPLKIIDQDISTGGRIVQFPELFSDRRKIEPLLEKFGEIPLPPYINRCDFKDVNRYQTRYASTPGAVAAPTAGLHLSDQFLEALSQQGIKDAKVTLHVGLGTFRPLVEENLANLHLHSEWVEVKEEVVSAIKECRDRGGRVIAIGTTTVRSLEASFLAGDGCLKPFKGEVDLVIKPGYKFGIVDGLLTNFHLPKSSLLLLVSALIGRENLLELYKEAIDQKYRFFSYGDAMFISPEGVLPSARL.

The protein belongs to the QueA family. Monomer.

It is found in the cytoplasm. The catalysed reaction is 7-aminomethyl-7-carbaguanosine(34) in tRNA + S-adenosyl-L-methionine = epoxyqueuosine(34) in tRNA + adenine + L-methionine + 2 H(+). The protein operates within tRNA modification; tRNA-queuosine biosynthesis. Functionally, transfers and isomerizes the ribose moiety from AdoMet to the 7-aminomethyl group of 7-deazaguanine (preQ1-tRNA) to give epoxyqueuosine (oQ-tRNA). The protein is S-adenosylmethionine:tRNA ribosyltransferase-isomerase of Prochlorococcus marinus (strain SARG / CCMP1375 / SS120).